The following is a 107-amino-acid chain: Large ribosomal subunit protein eL33A (107 aa).

At A2 the chain carries N-acetylalanine; partial. A Glycyl lysine isopeptide (Lys-Gly) (interchain with G-Cter in ubiquitin) cross-link involves residue K47.

Belongs to the eukaryotic ribosomal protein eL33 family. As to quaternary structure, component of the large ribosomal subunit (LSU). Mature yeast ribosomes consist of a small (40S) and a large (60S) subunit. The 40S small subunit contains 1 molecule of ribosomal RNA (18S rRNA) and 33 different proteins (encoded by 57 genes). The large 60S subunit contains 3 rRNA molecules (25S, 5.8S and 5S rRNA) and 46 different proteins (encoded by 81 genes). N-terminally acetylated by acetyltransferase NatA.

The protein localises to the cytoplasm. Functionally, component of the ribosome, a large ribonucleoprotein complex responsible for the synthesis of proteins in the cell. The small ribosomal subunit (SSU) binds messenger RNAs (mRNAs) and translates the encoded message by selecting cognate aminoacyl-transfer RNA (tRNA) molecules. The large subunit (LSU) contains the ribosomal catalytic site termed the peptidyl transferase center (PTC), which catalyzes the formation of peptide bonds, thereby polymerizing the amino acids delivered by tRNAs into a polypeptide chain. The nascent polypeptides leave the ribosome through a tunnel in the LSU and interact with protein factors that function in enzymatic processing, targeting, and the membrane insertion of nascent chains at the exit of the ribosomal tunnel. This chain is Large ribosomal subunit protein eL33A, found in Saccharomyces cerevisiae (strain ATCC 204508 / S288c) (Baker's yeast).